The primary structure comprises 346 residues: UDP-N-acetylenolpyruvoylglucosamine reductase (346 aa).

In terms of domain architecture, FAD-binding PCMH-type spans 18 to 189 (LRAQARAFIA…VSVVFALKTH (172 aa)). Arg-165 is an active-site residue. The Proton donor role is filled by Ser-240. Residue Glu-336 is part of the active site.

It belongs to the MurB family. The cofactor is FAD.

The protein resides in the cytoplasm. It carries out the reaction UDP-N-acetyl-alpha-D-muramate + NADP(+) = UDP-N-acetyl-3-O-(1-carboxyvinyl)-alpha-D-glucosamine + NADPH + H(+). It participates in cell wall biogenesis; peptidoglycan biosynthesis. Functionally, cell wall formation. The protein is UDP-N-acetylenolpyruvoylglucosamine reductase of Neisseria meningitidis serogroup C (strain 053442).